A 203-amino-acid chain; its full sequence is ATP-dependent Clp protease proteolytic subunit 1 (203 aa).

Catalysis depends on Ser101, which acts as the Nucleophile. His126 is an active-site residue.

The protein belongs to the peptidase S14 family. Fourteen ClpP subunits assemble into 2 heptameric rings which stack back to back to give a disk-like structure with a central cavity, resembling the structure of eukaryotic proteasomes.

The protein localises to the cytoplasm. It carries out the reaction Hydrolysis of proteins to small peptides in the presence of ATP and magnesium. alpha-casein is the usual test substrate. In the absence of ATP, only oligopeptides shorter than five residues are hydrolyzed (such as succinyl-Leu-Tyr-|-NHMec, and Leu-Tyr-Leu-|-Tyr-Trp, in which cleavage of the -Tyr-|-Leu- and -Tyr-|-Trp bonds also occurs).. Its function is as follows. Cleaves peptides in various proteins in a process that requires ATP hydrolysis. Has a chymotrypsin-like activity. Plays a major role in the degradation of misfolded proteins. This Synechococcus sp. (strain JA-3-3Ab) (Cyanobacteria bacterium Yellowstone A-Prime) protein is ATP-dependent Clp protease proteolytic subunit 1.